We begin with the raw amino-acid sequence, 40 residues long: Metallothionein-1 (40 aa).

It belongs to the metallothionein superfamily. Type 5 family.

Functionally, this protein binds cations of several transition elements. It is thought to be involved in detoxification processes. The sequence is that of Metallothionein-1 (MtnA) from Drosophila melanogaster (Fruit fly).